Reading from the N-terminus, the 435-residue chain is Glutamate-1-semialdehyde 2,1-aminomutase (435 aa).

Position 266 is an N6-(pyridoxal phosphate)lysine (K266).

The protein belongs to the class-III pyridoxal-phosphate-dependent aminotransferase family. HemL subfamily. In terms of assembly, homodimer. Requires pyridoxal 5'-phosphate as cofactor.

Its subcellular location is the cytoplasm. The enzyme catalyses (S)-4-amino-5-oxopentanoate = 5-aminolevulinate. The protein operates within porphyrin-containing compound metabolism; protoporphyrin-IX biosynthesis; 5-aminolevulinate from L-glutamyl-tRNA(Glu): step 2/2. This Coxiella burnetii (strain Dugway 5J108-111) protein is Glutamate-1-semialdehyde 2,1-aminomutase.